Here is a 237-residue protein sequence, read N- to C-terminus: Putative exosome complex component rrp40 (237 aa).

One can recognise an S1 motif domain in the interval 67–137; the sequence is EDMVIGTIIE…EPEVVCLSQK (71 aa).

This sequence belongs to the RRP40 family. As to quaternary structure, component of the RNA exosome complex.

Its subcellular location is the cytoplasm. The protein localises to the nucleus. It localises to the nucleolus. In terms of biological role, non-catalytic component of the RNA exosome complex which has 3'-&gt;5' exoribonuclease activity and participates in a multitude of cellular RNA processing and degradation events. The protein is Putative exosome complex component rrp40 (exosc3) of Dictyostelium discoideum (Social amoeba).